Consider the following 351-residue polypeptide: Fe(3+) ions import ATP-binding protein FbpC (351 aa).

The ABC transporter domain maps to 7-237 (VVLKNICKRF…PKSMFMANFM (231 aa)). 39-46 (GPSGCGKT) provides a ligand contact to ATP.

The protein belongs to the ABC transporter superfamily. Fe(3+) ion importer (TC 3.A.1.10) family. In terms of assembly, the complex is composed of two ATP-binding proteins (FbpC), two transmembrane proteins (FbpB) and a solute-binding protein (FbpA).

The protein resides in the cell inner membrane. The catalysed reaction is Fe(3+)(out) + ATP + H2O = Fe(3+)(in) + ADP + phosphate + H(+). Part of the ABC transporter complex FbpABC involved in Fe(3+) ions import. Responsible for energy coupling to the transport system. This chain is Fe(3+) ions import ATP-binding protein FbpC, found in Vibrio cholerae serotype O1 (strain ATCC 39315 / El Tor Inaba N16961).